The chain runs to 859 residues: Ribose import ATP-binding protein RbsA 1 (859 aa).

A disordered region spans residues 1–351; sequence MRASLENGDD…AARAPDEASE (351 aa). The tract at residues 1–353 is unknown; sequence MRASLENGDD…RAPDEASEEA (353 aa). Positions 8–17 are enriched in basic and acidic residues; that stretch reads GDDHDAHRLV. The span at 28-43 shows a compositional bias: basic residues; the sequence is RAARRRAFARARRGER. Basic and acidic residues-rich tracts occupy residues 44–80, 89–129, and 137–167; these read RARG…DRRA, RREQ…EEGG, and RERE…EGDR. The segment covering 168–179 has biased composition (basic residues); sequence RRRRSRDPRRHP. Basic and acidic residues-rich tracts occupy residues 193–214, 239–250, 263–281, 288–301, and 308–323; these read GARE…GARE, RLDGRAVRDRGV, AGGD…RDVR, DSPR…EEVG, and DSGR…REDV. 2 ABC transporter domains span residues 358–594 and 607–851; these read LALT…VGRR and RDAA…TSDV. 390-397 contacts ATP; that stretch reads GENGAGKS.

The protein belongs to the ABC transporter superfamily. Ribose importer (TC 3.A.1.2.1) family. In terms of assembly, the complex is composed of an ATP-binding protein (RbsA), two transmembrane proteins (RbsC) and a solute-binding protein (RbsB).

Its subcellular location is the cell inner membrane. It carries out the reaction D-ribose(out) + ATP + H2O = D-ribose(in) + ADP + phosphate + H(+). In terms of biological role, part of the ABC transporter complex RbsABC involved in ribose import. Responsible for energy coupling to the transport system. The sequence is that of Ribose import ATP-binding protein RbsA 1 from Burkholderia pseudomallei (strain 1710b).